The primary structure comprises 275 residues: 2,3,4,5-tetrahydropyridine-2,6-dicarboxylate N-succinyltransferase (275 aa).

R107 and D144 together coordinate substrate.

The protein belongs to the transferase hexapeptide repeat family. Homotrimer.

The protein localises to the cytoplasm. It catalyses the reaction (S)-2,3,4,5-tetrahydrodipicolinate + succinyl-CoA + H2O = (S)-2-succinylamino-6-oxoheptanedioate + CoA. The protein operates within amino-acid biosynthesis; L-lysine biosynthesis via DAP pathway; LL-2,6-diaminopimelate from (S)-tetrahydrodipicolinate (succinylase route): step 1/3. This Polynucleobacter asymbioticus (strain DSM 18221 / CIP 109841 / QLW-P1DMWA-1) (Polynucleobacter necessarius subsp. asymbioticus) protein is 2,3,4,5-tetrahydropyridine-2,6-dicarboxylate N-succinyltransferase.